Reading from the N-terminus, the 145-residue chain is Large ribosomal subunit protein uL11m (145 aa).

It belongs to the universal ribosomal protein uL11 family.

It localises to the mitochondrion. This is Large ribosomal subunit protein uL11m (RPL11) from Reclinomonas americana.